A 216-amino-acid chain; its full sequence is UPF0301 protein BBta_6966 (216 aa).

This sequence belongs to the UPF0301 (AlgH) family.

The protein is UPF0301 protein BBta_6966 of Bradyrhizobium sp. (strain BTAi1 / ATCC BAA-1182).